Reading from the N-terminus, the 498-residue chain is Envelop protein OPG153 (498 aa).

A disulfide bridge links Cys43 with Cys342. Positions 352-391 (ATDTGHHQDSKINIKDDDVDDDDYNPKPTPIPEPYPRPPF) are disordered. Positions 355–367 (TGHHQDSKINIKD) are enriched in basic and acidic residues. Residues 378 to 390 (KPTPIPEPYPRPP) are compositionally biased toward pro residues.

Belongs to the orthopoxvirus OPG153 protein family. As to quaternary structure, interacts with proteins OPG094 and OPG143. Interacts with OPG154. Interacts with OPG152. Interacts with host laminin.

It localises to the virion membrane. Functionally, envelop protein that mediates acid-dependent endocytosis into host cells. Plays an important role in endocytic entry of the virus by acting as an acid-sensitive membrane fusion suppressor. Low pH in host endosomes triggers conformational changes to allow de-repression of viral fusion complex activity and membrane fusion within vesicles. Also plays a role in bridging the mature virion with structural protein OPG152. The chain is Envelop protein OPG153 (Protein OPG153) from Variola virus (isolate Human/India/Ind3/1967) (VARV).